We begin with the raw amino-acid sequence, 181 residues long: Oligoribonuclease (181 aa).

Positions 8–171 constitute an Exonuclease domain; it reads LIWIDLEMTG…DDIRESVAEL (164 aa). Tyrosine 129 is an active-site residue.

The protein belongs to the oligoribonuclease family.

It localises to the cytoplasm. Functionally, 3'-to-5' exoribonuclease specific for small oligoribonucleotides. This Shigella flexneri protein is Oligoribonuclease.